Here is a 531-residue protein sequence, read N- to C-terminus: Unconventional prefoldin RPB5 interactor (531 aa).

Residue M1 is modified to N-acetylmethionine. Disordered stretches follow at residues 1 to 24 (MEPP…APLR), 224 to 381 (ELES…ELPA), 408 to 470 (KSRS…SGVS), and 500 to 531 (TIPE…QQRS). Low complexity predominate over residues 13-24 (PLAEASAAAPLR). 2 stretches are compositionally biased toward polar residues: residues 257–266 (SPVTDSSAAS) and 280–296 (GQVN…NSYH). Residues 300-319 (DDDEEEEDDDDDDDEDDDNE) show a composition bias toward acidic residues. S369 bears the Phosphoserine; by RPS6KB1 mark. Over residues 414–424 (NSVCSDTSESS) the composition is skewed to polar residues. A Phosphoserine modification is found at S439.

It belongs to the RNA polymerase II subunit 5-mediating protein family. In terms of assembly, homodimer. Component of the PAQosome complex which is responsible for the biogenesis of several protein complexes and which consists of R2TP complex members RUVBL1, RUVBL2, RPAP3 and PIH1D1, URI complex members PFDN2, PFDN6, PDRG1, UXT and URI1 as well as ASDURF, POLR2E and DNAAF10/WDR92. Interacts with POLR2E/RPB5, RUVBL2 and RUVBL1. Interacts with PFDN2, PFDN4 and STAP1; the interactions are phosphorylation-dependent and occur in a growth-dependent manner in the mitochondrion. Interacts with UXT. Interacts with PPP1CC; the interaction is phosphorylation-dependent and occurs in a growth factor-dependent manner. Interacts (via the middle C-terminal region) with GTF2F1 and GTF2F2. Interacts with DMAP1. Interacts with TSC1 and TSC2. Interacts with PRPF8 and EFTUD2 in a ZNHIT2-dependent manner. In terms of processing, phosphorylation occurs in response to androgen treatment in prostate cancer cells in a mTOR-dependent manner. Phosphorylated; hyperhosphorylated in mitochondria in a mTORC-dependent signaling pathway. Phosphorylated at Ser-369 by RPS6KB1 in a growth factor- and rapamycin-dependent manner. S6K1-mediated mitochondrial phosphorylation at Ser-369 disrupts the URI1-PPP1CC complex in the mitochondrion, relieves PPP1CC phosphatase inhibition activity and hence engages a negative feedback diminishing RPS6KB1 kinase activity, preventing sustained S6K1-dependent signaling. Phosphorylated. Phosphorylation occurs essentially on serine residues. In terms of tissue distribution, expressed in the spinal cord, ganglia, choroid plexus and olfactors epithelium of the developing brain. Expressed in skin, lung, kidney, testis and muscles (at protein level). Expressed strongly in brain and kidney. Expressed weakly in skeletal muscle, lung and liver.

Its subcellular location is the nucleus. The protein resides in the cytoplasm. It localises to the mitochondrion. It is found in the cell projection. The protein localises to the dendrite. In terms of biological role, involved in gene transcription regulation. Acts as a transcriptional repressor in concert with the corepressor UXT to regulate androgen receptor (AR) transcription. May act as a tumor suppressor to repress AR-mediated gene transcription and to inhibit anchorage-independent growth in prostate cancer cells. Required for cell survival in ovarian cancer cells. Together with UXT, associates with chromatin to the NKX3-1 promoter region. Functionally, plays a central role in maintaining S6K1 signaling and BAD phosphorylation under normal growth conditions thereby protecting cells from potential deleterious effects of sustained S6K1 signaling. The URI1-PPP1CC complex acts as a central component of a negative feedback mechanism that counteracts excessive S6K1 survival signaling to BAD in response to growth factors. Mediates inhibition of PPP1CC phosphatase activity in mitochondria. Coordinates the regulation of nutrient-sensitive gene expression availability in a mTOR-dependent manner. Seems to be a scaffolding protein able to assemble a prefoldin-like complex that contains PFDs and proteins with roles in transcription and ubiquitination. The sequence is that of Unconventional prefoldin RPB5 interactor (Uri1) from Mus musculus (Mouse).